Here is a 112-residue protein sequence, read N- to C-terminus: uncharacterized protein (112 aa).

The helical transmembrane segment at 89–106 (TLYVLVIVGLTILCFLLV) threads the bilayer.

It belongs to the IIV-6 466R family.

The protein localises to the membrane. This is an uncharacterized protein from Aedes vexans (Inland floodwater mosquito).